Consider the following 763-residue polypeptide: Phosphoglycerol transferase I (763 aa).

Transmembrane regions (helical) follow at residues 4 to 19, 26 to 48, 76 to 98, and 105 to 127; these read LLSFALFLASVLIYAW, WWFAATLTVLGLFVVLNITLFAS, YILPGIGIVLGLAAVFGALGWIL, and PHHFGYSLLALLLALGSVDASPA.

The protein belongs to the OpgB family.

Its subcellular location is the cell inner membrane. It carries out the reaction a phosphatidylglycerol + a membrane-derived-oligosaccharide D-glucose = a 1,2-diacyl-sn-glycerol + a membrane-derived-oligosaccharide 6-(glycerophospho)-D-glucose.. It functions in the pathway glycan metabolism; osmoregulated periplasmic glucan (OPG) biosynthesis. Transfers a phosphoglycerol residue from phosphatidylglycerol to the membrane-bound nascent glucan backbones. The polypeptide is Phosphoglycerol transferase I (Escherichia coli O6:H1 (strain CFT073 / ATCC 700928 / UPEC)).